The sequence spans 1183 residues: DNA-directed RNA polymerase subunit beta (1183 aa).

Residues 1151 to 1162 (EIEMADVDDEDA) are compositionally biased toward acidic residues. The disordered stretch occupies residues 1151-1183 (EIEMADVDDEDAAERKVDLQQKSAPESQKETTD).

The protein belongs to the RNA polymerase beta chain family. In terms of assembly, the RNAP catalytic core consists of 2 alpha, 1 beta, 1 beta' and 1 omega subunit. When a sigma factor is associated with the core the holoenzyme is formed, which can initiate transcription.

It catalyses the reaction RNA(n) + a ribonucleoside 5'-triphosphate = RNA(n+1) + diphosphate. Its function is as follows. DNA-dependent RNA polymerase catalyzes the transcription of DNA into RNA using the four ribonucleoside triphosphates as substrates. This chain is DNA-directed RNA polymerase subunit beta, found in Staphylococcus epidermidis (strain ATCC 12228 / FDA PCI 1200).